Here is a 470-residue protein sequence, read N- to C-terminus: tRNA modification GTPase MnmE (470 aa).

(6S)-5-formyl-5,6,7,8-tetrahydrofolate-binding residues include arginine 24, glutamate 81, and lysine 122. The region spanning 218-383 (GIKIVIAGKP…LQEYLSNNIK (166 aa)) is the TrmE-type G domain. Residue asparagine 228 coordinates K(+). Residues 228–233 (NAGKSS), 247–253 (STISGTT), and 272–275 (DTAG) each bind GTP. Serine 232 is a binding site for Mg(2+). Residues serine 247, isoleucine 249, and threonine 252 each contribute to the K(+) site. Position 253 (threonine 253) interacts with Mg(2+). Position 470 (lysine 470) interacts with (6S)-5-formyl-5,6,7,8-tetrahydrofolate.

This sequence belongs to the TRAFAC class TrmE-Era-EngA-EngB-Septin-like GTPase superfamily. TrmE GTPase family. Homodimer. Heterotetramer of two MnmE and two MnmG subunits. The cofactor is K(+).

It localises to the cytoplasm. In terms of biological role, exhibits a very high intrinsic GTPase hydrolysis rate. Involved in the addition of a carboxymethylaminomethyl (cmnm) group at the wobble position (U34) of certain tRNAs, forming tRNA-cmnm(5)s(2)U34. This is tRNA modification GTPase MnmE from Blochmanniella pennsylvanica (strain BPEN).